The primary structure comprises 158 residues: Transcriptional regulator MraZ (158 aa).

SpoVT-AbrB domains follow at residues 5–52 and 91–134; these read IYET…TFSS and AVEC…SQAE.

It belongs to the MraZ family. Forms oligomers.

It is found in the cytoplasm. Its subcellular location is the nucleoid. The protein is Transcriptional regulator MraZ of Geobacter sulfurreducens (strain ATCC 51573 / DSM 12127 / PCA).